A 173-amino-acid polypeptide reads, in one-letter code: Mesencephalic astrocyte-derived neurotrophic factor homolog (173 aa).

An N-terminal signal peptide occupies residues 1 to 22 (MKTWYMVVVIGFLATLAQTSLA). 4 disulfide bridges follow: C28-C114, C31-C103, C61-C72, and C148-C151.

Belongs to the ARMET family.

The protein resides in the secreted. Its function is as follows. Required during the maturation of the embryonic nervous system for maintenance of neuronal and cuticular connectivity. Essential for maintenance of dopaminergic neurons and dopamine levels. This Drosophila erecta (Fruit fly) protein is Mesencephalic astrocyte-derived neurotrophic factor homolog.